The sequence spans 323 residues: Tetraacyldisaccharide 4'-kinase (323 aa).

An ATP-binding site is contributed by Thr56 to Thr63.

The protein belongs to the LpxK family.

It catalyses the reaction a lipid A disaccharide + ATP = a lipid IVA + ADP + H(+). It participates in glycolipid biosynthesis; lipid IV(A) biosynthesis; lipid IV(A) from (3R)-3-hydroxytetradecanoyl-[acyl-carrier-protein] and UDP-N-acetyl-alpha-D-glucosamine: step 6/6. In terms of biological role, transfers the gamma-phosphate of ATP to the 4'-position of a tetraacyldisaccharide 1-phosphate intermediate (termed DS-1-P) to form tetraacyldisaccharide 1,4'-bis-phosphate (lipid IVA). The polypeptide is Tetraacyldisaccharide 4'-kinase (Legionella pneumophila (strain Lens)).